The following is a 689-amino-acid chain: Beta-galactosidase Pbg (689 aa).

Substrate is bound at residue Arg-118. Residue Cys-122 participates in Zn(2+) binding. A substrate-binding site is contributed by Asn-156. Glu-157 (proton donor) is an active-site residue. Cys-162, Cys-164, and Cys-167 together coordinate Zn(2+). The Nucleophile role is filled by Glu-318. Residues Trp-326 and 366–369 contribute to the substrate site; that span reads EKFH.

It belongs to the glycosyl hydrolase 42 family.

It catalyses the reaction Hydrolysis of terminal non-reducing beta-D-galactose residues in beta-D-galactosides.. The sequence is that of Beta-galactosidase Pbg from Clostridium perfringens (strain ATCC 13124 / DSM 756 / JCM 1290 / NCIMB 6125 / NCTC 8237 / Type A).